The primary structure comprises 1049 residues: Dyslexia-associated protein KIAA0319-like protein (1049 aa).

The Cytoplasmic segment spans residues 1–29 (MEKRLGVKPNPASWILSGYYWQTSAKWLR). A helical membrane pass occupies residues 30–50 (SLYLFYTCFCFSVLWLSTDAS). The region spanning 49-127 (ASESRCQQGK…AFRTHSSNSM (79 aa)) is the MANSC domain. Residues 51 to 932 (ESRCQQGKTQ…DSNCEWSVLY (882 aa)) are Extracellular-facing. 5 N-linked (GlcNAc...) asparagine glycosylation sites follow: Asn-247, Asn-395, Asn-472, Asn-487, and Asn-525. 5 PKD domains span residues 312–401 (SAGE…VKPE), 409–498 (IAIV…VNKA), 504–594 (VANA…VQPE), 600–688 (QADA…VKEE), and 694–785 (IAKI…VKPD). Residues 933 to 953 (VIIATFVIVVALGILSWTVIC) traverse the membrane as a helical segment. Topologically, residues 954–1049 (CCKRQKGKPK…KARSPREEIL (96 aa)) are cytoplasmic. Thr-974 is modified (phosphothreonine). Phosphoserine is present on residues Ser-978, Ser-1009, and Ser-1031. Positions 1022–1049 (GKLLHGQNGSVPNGQTPLKARSPREEIL) are disordered. The span at 1028–1037 (QNGSVPNGQT) shows a compositional bias: polar residues. A Phosphothreonine modification is found at Thr-1037.

As to quaternary structure, interacts with RTN4R. In terms of assembly, (Microbial infection) Interacts with AAV-2 VP1. In terms of processing, N-glycosylated. Expressed in cortical neurons in the brain cortex (at protein level).

The protein resides in the cytoplasmic granule membrane. The protein localises to the golgi apparatus membrane. It localises to the golgi apparatus. Its subcellular location is the trans-Golgi network membrane. It is found in the cell membrane. In terms of biological role, possible role in axon guidance through interaction with RTN4R. (Microbial infection) Acts as a receptor for adeno-associated virus and is involved in adeno-associated virus infection through endocytosis system. The sequence is that of Dyslexia-associated protein KIAA0319-like protein from Homo sapiens (Human).